We begin with the raw amino-acid sequence, 198 residues long: Ribonuclease HII (198 aa).

The 190-residue stretch at 9–198 folds into the RNase H type-2 domain; it reads ITVAGADEAG…LLPDQLKIDF (190 aa). A divalent metal cation is bound by residues Asp15, Glu16, and Asp107.

Belongs to the RNase HII family. The cofactor is Mn(2+). It depends on Mg(2+) as a cofactor.

The protein localises to the cytoplasm. The enzyme catalyses Endonucleolytic cleavage to 5'-phosphomonoester.. In terms of biological role, endonuclease that specifically degrades the RNA of RNA-DNA hybrids. The protein is Ribonuclease HII of Christiangramia forsetii (strain DSM 17595 / CGMCC 1.15422 / KT0803) (Gramella forsetii).